We begin with the raw amino-acid sequence, 184 residues long: NADH-quinone oxidoreductase subunit B (184 aa).

[4Fe-4S] cluster-binding residues include cysteine 63, cysteine 64, cysteine 128, and cysteine 158.

It belongs to the complex I 20 kDa subunit family. In terms of assembly, NDH-1 is composed of 14 different subunits. Subunits NuoB, C, D, E, F, and G constitute the peripheral sector of the complex. The cofactor is [4Fe-4S] cluster.

It localises to the cell inner membrane. The catalysed reaction is a quinone + NADH + 5 H(+)(in) = a quinol + NAD(+) + 4 H(+)(out). Its function is as follows. NDH-1 shuttles electrons from NADH, via FMN and iron-sulfur (Fe-S) centers, to quinones in the respiratory chain. The immediate electron acceptor for the enzyme in this species is believed to be ubiquinone. Couples the redox reaction to proton translocation (for every two electrons transferred, four hydrogen ions are translocated across the cytoplasmic membrane), and thus conserves the redox energy in a proton gradient. This Xanthomonas axonopodis pv. citri (strain 306) protein is NADH-quinone oxidoreductase subunit B.